A 371-amino-acid polypeptide reads, in one-letter code: DNA replication and repair protein RecF (371 aa).

30–37 (GPNAQGKT) is an ATP binding site.

Belongs to the RecF family.

It localises to the cytoplasm. The RecF protein is involved in DNA metabolism; it is required for DNA replication and normal SOS inducibility. RecF binds preferentially to single-stranded, linear DNA. It also seems to bind ATP. This is DNA replication and repair protein RecF from Desulforamulus reducens (strain ATCC BAA-1160 / DSM 100696 / MI-1) (Desulfotomaculum reducens).